A 310-amino-acid chain; its full sequence is Acetylglutamate kinase (310 aa).

Residues 70–71, Arg-92, and Asn-191 contribute to the substrate site; that span reads GG.

Belongs to the acetylglutamate kinase family. ArgB subfamily.

It is found in the cytoplasm. The catalysed reaction is N-acetyl-L-glutamate + ATP = N-acetyl-L-glutamyl 5-phosphate + ADP. Its pathway is amino-acid biosynthesis; L-arginine biosynthesis; N(2)-acetyl-L-ornithine from L-glutamate: step 2/4. In terms of biological role, catalyzes the ATP-dependent phosphorylation of N-acetyl-L-glutamate. This is Acetylglutamate kinase from Corynebacterium diphtheriae (strain ATCC 700971 / NCTC 13129 / Biotype gravis).